We begin with the raw amino-acid sequence, 427 residues long: D-inositol 3-phosphate glycosyltransferase 2 (427 aa).

1D-myo-inositol 3-phosphate is bound at residue His14. UDP-N-acetyl-alpha-D-glucosamine contacts are provided by residues 20–21 (QP) and Gly28. Residues 25–30 (DAGGMN), Lys83, Tyr116, Thr140, and Arg160 contribute to the 1D-myo-inositol 3-phosphate site. Residues Arg234, Lys239, and Val300 each coordinate UDP-N-acetyl-alpha-D-glucosamine. Tyr309, Arg310, and Ala312 together coordinate Mg(2+). The UDP-N-acetyl-alpha-D-glucosamine site is built by Glu322 and Glu330. A Mg(2+)-binding site is contributed by Thr336.

Belongs to the glycosyltransferase group 1 family. MshA subfamily. Homodimer.

It carries out the reaction 1D-myo-inositol 3-phosphate + UDP-N-acetyl-alpha-D-glucosamine = 1D-myo-inositol 2-acetamido-2-deoxy-alpha-D-glucopyranoside 3-phosphate + UDP + H(+). Its function is as follows. Catalyzes the transfer of a N-acetyl-glucosamine moiety to 1D-myo-inositol 3-phosphate to produce 1D-myo-inositol 2-acetamido-2-deoxy-glucopyranoside 3-phosphate in the mycothiol biosynthesis pathway. The chain is D-inositol 3-phosphate glycosyltransferase 2 from Catenulispora acidiphila (strain DSM 44928 / JCM 14897 / NBRC 102108 / NRRL B-24433 / ID139908).